Reading from the N-terminus, the 394-residue chain is Ketoisovalerate oxidoreductase subunit VorA (394 aa).

Heterotetramer of one alpha, one beta, one delta and one gamma chain.

The catalysed reaction is 3-methyl-2-oxobutanoate + 2 oxidized [2Fe-2S]-[ferredoxin] + CoA = 2-methylpropanoyl-CoA + 2 reduced [2Fe-2S]-[ferredoxin] + CO2 + H(+). The sequence is that of Ketoisovalerate oxidoreductase subunit VorA (vorA) from Pyrococcus furiosus (strain ATCC 43587 / DSM 3638 / JCM 8422 / Vc1).